The primary structure comprises 699 residues: DNA topoisomerase 1 (699 aa).

Composition is skewed to basic and acidic residues over residues 1–15 (MAKSKVVEKDKKNEL) and 22–35 (IELKGQSKNEESKG). Positions 1-37 (MAKSKVVEKDKKNELDNQSADIELKGQSKNEESKGGK) are disordered. A Toprim domain is found at 38–146 (KKVIIVESPA…NIITFTEITE (109 aa)). Mg(2+) is bound by residues glutamate 44 and aspartate 115. One can recognise a Topo IA-type catalytic domain in the interval 160-583 (DMNKVNAQLA…SFLKEFNKDL (424 aa)). The segment at 194–199 (SAGRVQ) is interaction with DNA. Residue tyrosine 324 is the O-(5'-phospho-DNA)-tyrosine intermediate of the active site. Residues 601 to 624 (CEDCSGNYKLKVGKYGLYLHCPNC) form a C4-type zinc finger. Residues 649 to 699 (QESQEENGEKNSVQSEESSANSGNRKFYRKRRTSGSKKSSTKSASSKAKKK) are disordered. Positions 661–672 (VQSEESSANSGN) are enriched in polar residues. Residues 674–683 (KFYRKRRTSG) are compositionally biased toward basic residues. A compositionally biased stretch (low complexity) spans 684–699 (SKKSSTKSASSKAKKK).

Belongs to the type IA topoisomerase family. In terms of assembly, monomer. The cofactor is Mg(2+).

It carries out the reaction ATP-independent breakage of single-stranded DNA, followed by passage and rejoining.. Its function is as follows. Releases the supercoiling and torsional tension of DNA, which is introduced during the DNA replication and transcription, by transiently cleaving and rejoining one strand of the DNA duplex. Introduces a single-strand break via transesterification at a target site in duplex DNA. The scissile phosphodiester is attacked by the catalytic tyrosine of the enzyme, resulting in the formation of a DNA-(5'-phosphotyrosyl)-enzyme intermediate and the expulsion of a 3'-OH DNA strand. The free DNA strand then undergoes passage around the unbroken strand, thus removing DNA supercoils. Finally, in the religation step, the DNA 3'-OH attacks the covalent intermediate to expel the active-site tyrosine and restore the DNA phosphodiester backbone. The polypeptide is DNA topoisomerase 1 (Fervidobacterium islandicum).